The following is a 234-amino-acid chain: Lipoprotein-releasing system ATP-binding protein LolD (234 aa).

An ABC transporter domain is found at 7-233; the sequence is LQCINLCKRY…LQHHLTLVGA (227 aa). 43–50 contacts ATP; it reads GSSGSGKS.

It belongs to the ABC transporter superfamily. Lipoprotein translocase (TC 3.A.1.125) family. In terms of assembly, the complex is composed of two ATP-binding proteins (LolD) and two transmembrane proteins (LolC and LolE).

The protein resides in the cell inner membrane. Part of the ABC transporter complex LolCDE involved in the translocation of mature outer membrane-directed lipoproteins, from the inner membrane to the periplasmic chaperone, LolA. Responsible for the formation of the LolA-lipoprotein complex in an ATP-dependent manner. This chain is Lipoprotein-releasing system ATP-binding protein LolD, found in Yersinia pestis bv. Antiqua (strain Antiqua).